A 138-amino-acid chain; its full sequence is Rubber elongation factor protein (138 aa).

Alanine 2 carries the post-translational modification N-acetylalanine.

This sequence belongs to the REF/SRPP family. In solution, able to form amyloid fibers and aggregates rich in beta-sheets. Interaction with membrane stabilizes the protein, inhibiting the amyloid state and aggregation. Not glycosylated. Localized in all laticifer layers.

Its subcellular location is the cytoplasm. Functionally, may be part of the rubber biosynthesis machinery. Plays a role in rubber elongation. This chain is Rubber elongation factor protein, found in Hevea brasiliensis (Para rubber tree).